A 135-amino-acid polypeptide reads, in one-letter code: uncharacterized protein (135 aa).

This is an uncharacterized protein from Fowl adenovirus A serotype 1 (strain CELO / Phelps) (FAdV-1).